Reading from the N-terminus, the 156-residue chain is ATP synthase subunit b (156 aa).

The chain crosses the membrane as a helical span at residues 11–31 (AIAFVIFVWFCMKYVWPPLMA).

It belongs to the ATPase B chain family. F-type ATPases have 2 components, F(1) - the catalytic core - and F(0) - the membrane proton channel. F(1) has five subunits: alpha(3), beta(3), gamma(1), delta(1), epsilon(1). F(0) has three main subunits: a(1), b(2) and c(10-14). The alpha and beta chains form an alternating ring which encloses part of the gamma chain. F(1) is attached to F(0) by a central stalk formed by the gamma and epsilon chains, while a peripheral stalk is formed by the delta and b chains.

The protein resides in the cell inner membrane. In terms of biological role, f(1)F(0) ATP synthase produces ATP from ADP in the presence of a proton or sodium gradient. F-type ATPases consist of two structural domains, F(1) containing the extramembraneous catalytic core and F(0) containing the membrane proton channel, linked together by a central stalk and a peripheral stalk. During catalysis, ATP synthesis in the catalytic domain of F(1) is coupled via a rotary mechanism of the central stalk subunits to proton translocation. Component of the F(0) channel, it forms part of the peripheral stalk, linking F(1) to F(0). The chain is ATP synthase subunit b from Klebsiella pneumoniae (strain 342).